The following is a 131-amino-acid chain: Aspartate 1-decarboxylase (131 aa).

The active-site Schiff-base intermediate with substrate; via pyruvic acid is Ser25. Position 25 is a pyruvic acid (Ser) (Ser25). Residue Thr57 participates in substrate binding. The active-site Proton donor is the Tyr58. 73 to 75 (GAA) contacts substrate. The tract at residues 112 to 131 (NVPTTQKSENPGQGSLRNAI) is disordered. The span at 113–131 (VPTTQKSENPGQGSLRNAI) shows a compositional bias: polar residues.

Belongs to the PanD family. As to quaternary structure, heterooctamer of four alpha and four beta subunits. It depends on pyruvate as a cofactor. In terms of processing, is synthesized initially as an inactive proenzyme, which is activated by self-cleavage at a specific serine bond to produce a beta-subunit with a hydroxyl group at its C-terminus and an alpha-subunit with a pyruvoyl group at its N-terminus.

It is found in the cytoplasm. It catalyses the reaction L-aspartate + H(+) = beta-alanine + CO2. The protein operates within cofactor biosynthesis; (R)-pantothenate biosynthesis; beta-alanine from L-aspartate: step 1/1. Catalyzes the pyruvoyl-dependent decarboxylation of aspartate to produce beta-alanine. This Syntrophotalea carbinolica (strain DSM 2380 / NBRC 103641 / GraBd1) (Pelobacter carbinolicus) protein is Aspartate 1-decarboxylase.